The sequence spans 414 residues: Dual-specificity RNA methyltransferase RlmN (414 aa).

Over residues 1 to 20 the composition is skewed to low complexity; the sequence is MMSTPETATEATAPEAAPAP. Residues 1-24 are disordered; that stretch reads MMSTPETATEATAPEAAPAPSLGA. The active-site Proton acceptor is the glutamate 129. A Radical SAM core domain is found at 135 to 385; the sequence is ESDRGTLCVS…VRTPRGRDIL (251 aa). Cysteine 142 and cysteine 388 are disulfide-bonded. [4Fe-4S] cluster is bound by residues cysteine 149, cysteine 153, and cysteine 156. S-adenosyl-L-methionine contacts are provided by residues 214–215, serine 246, 268–270, and asparagine 345; these read GE and SLH. Cysteine 388 acts as the S-methylcysteine intermediate in catalysis.

It belongs to the radical SAM superfamily. RlmN family. [4Fe-4S] cluster is required as a cofactor.

The protein localises to the cytoplasm. The catalysed reaction is adenosine(2503) in 23S rRNA + 2 reduced [2Fe-2S]-[ferredoxin] + 2 S-adenosyl-L-methionine = 2-methyladenosine(2503) in 23S rRNA + 5'-deoxyadenosine + L-methionine + 2 oxidized [2Fe-2S]-[ferredoxin] + S-adenosyl-L-homocysteine. The enzyme catalyses adenosine(37) in tRNA + 2 reduced [2Fe-2S]-[ferredoxin] + 2 S-adenosyl-L-methionine = 2-methyladenosine(37) in tRNA + 5'-deoxyadenosine + L-methionine + 2 oxidized [2Fe-2S]-[ferredoxin] + S-adenosyl-L-homocysteine. Its function is as follows. Specifically methylates position 2 of adenine 2503 in 23S rRNA and position 2 of adenine 37 in tRNAs. m2A2503 modification seems to play a crucial role in the proofreading step occurring at the peptidyl transferase center and thus would serve to optimize ribosomal fidelity. This is Dual-specificity RNA methyltransferase RlmN from Xanthobacter autotrophicus (strain ATCC BAA-1158 / Py2).